Consider the following 886-residue polypeptide: MSIPKQLPCMVRALYAWPGEREGDLKFTEGDLIECLSIGDGKWWIGRHINTNTQGIFPSNFVHCLDIPTVRPGSSMSRTSASSFRYSSPQKSSIDTPITSSDQGLTPDLVGSSNALNKPTRESDSLKHQKSHPMLNSLGSSLSLKKSVSRPPSSMSRTNLDVSSRWDNTADNDSQIDAQDLSRSTPSPLRSAMENVLQSLNAMGKKSFSRANSPLLRLTKSTTTSKETDFIPVPPAHGSTSMTSRSKLDDSTDNSSKPRTSLQPGESPMKSSRDISRKPSMASSVLSPSDYFPQHRRFQSAPAPIPRPVSTLIPLTQVRTTASNVIKPRPQTTERPSTAQSFRKGGGFLKKTFKKLLRRGSSKRKPSLQPTPPVSYPAHNVPQKGVRPASPHTLKSVKDDLKRTKTYTKAEFAAKREEIFNKLSMPVYEPLKDLSECIGNVLADGEPVQFSVGTNIHNMNFSAIDKQIRSIIPQRVQVSPAVLAKNYLAPGQTTALAQMRAVFIYISERITFTNQTLDNDELRTSTQVISEGQGTPFEVALLVKEMLQALDLWCEVIEGYLKSPDDIYYTRDININHAWNVVTFDNEVRLIDASFASPTHPQQALKSSSSNDFYFLMKPNECIFTHVPENPDQQFIMPDLSMPIVMALPWVSSVYFTLGLKLRKFNTSILHLNDLEVLQIEFLAPKDIECVAEVDALSALAPTADVSQCYKYTLTQAFWETPDIRVMRVKAVMPANNRAAVLRIYAGRLGVSSPVRTAPHPMAMSLPFVHHGKNKALEFVTRHPVPHCPSVDLYINSPQCGTLHSGVEYKFNVSAYACQPSTSISNTRLAIQTPTGNIVRLREERSGNGVIFFSLSLTINETGEYRALILAEKIGRWVVYATWQAV.

The 62-residue stretch at Gln-6–Ile-67 folds into the SH3 domain. Positions Pro-72–Ser-88 are enriched in low complexity. Residues Pro-72–Leu-189 form a disordered region. Polar residues predominate over residues Pro-89 to Gly-104. A compositionally biased stretch (low complexity) spans Leu-135–Ser-154. Over residues Met-155–Pro-188 the composition is skewed to polar residues. Ser-213 is subject to Phosphoserine. Disordered stretches follow at residues Thr-219–Asp-290 and Arg-358–Thr-393. A compositionally biased stretch (polar residues) spans Asp-253–Pro-264.

The protein belongs to the CYK3 family.

It is found in the cell tip. Its function is as follows. Involved in cytokinesis. This is cytokinesis protein 3 (cyk3) from Schizosaccharomyces pombe (strain 972 / ATCC 24843) (Fission yeast).